The primary structure comprises 66 residues: Conotoxin Cl14.1a (66 aa).

A signal peptide spans 1–19; that stretch reads MNVTAMFIVLLLTMPLTDG. A propeptide spanning residues 20-49 is cleaved from the precursor; that stretch reads FNIRAINGGELFGLVQRDAGNALDHGFYRR.

Belongs to the conotoxin L superfamily. In terms of processing, contains 2 disulfide bonds. Expressed by the venom duct.

Its subcellular location is the secreted. In terms of biological role, probable neurotoxin with unknown target. Possibly targets ion channels. This peptide could be considered as an apoptosis activator in some cancers (tested on lung and breast cancer cell lines). Provokes the decrease of H1299 lung cancer cells viability after 24 hours treatment, and induces a high Bax/Bcl-2 ratio, which suggests that this peptide can activate apoptosis in H1299 cells. In addition, H1299 and H1437 lung cancer cell lines treated with this peptide have decreased cell viability, activated caspases, and reduced expression of the pro-survival protein NF-kappa-B (NFKB1), indicating activation of apoptosis. In synergy with MicroRNA-101-3p, this synthetic peptide inhibits breast cancer cells (SK-BR-3 and MCF-7) migration, invasion, and proliferation through suppressing the expression of the methyltransferase EZH2. In parallel, this synergy treatment is able to promote the apoptosis of breast cancer cells. Against microbes, this synthetic toxin (at micromolar concentrations) lowers viability and inhibits host cell invasion by the opportunistic parasite Toxoplasma gondii (tachyzoite form). In addition, it permits T.gondii intracellular replication to decrease while viability of the host cell is unaffected. This chain is Conotoxin Cl14.1a, found in Californiconus californicus (California cone).